The chain runs to 114 residues: Putative pterin-4-alpha-carbinolamine dehydratase (114 aa).

It belongs to the pterin-4-alpha-carbinolamine dehydratase family.

It carries out the reaction (4aS,6R)-4a-hydroxy-L-erythro-5,6,7,8-tetrahydrobiopterin = (6R)-L-erythro-6,7-dihydrobiopterin + H2O. The protein is Putative pterin-4-alpha-carbinolamine dehydratase of Methylococcus capsulatus (strain ATCC 33009 / NCIMB 11132 / Bath).